A 592-amino-acid polypeptide reads, in one-letter code: Membrane protein insertase YidC (592 aa).

A helical transmembrane segment spans residues asparagine 7–valine 27. The interval alanine 38–glutamine 74 is disordered. A compositionally biased stretch (low complexity) spans alanine 41–glycine 69. 4 consecutive transmembrane segments (helical) span residues leucine 367–phenylalanine 387, tryptophan 441–isoleucine 461, leucine 486–isoleucine 506, and phenylalanine 530–isoleucine 550.

This sequence belongs to the OXA1/ALB3/YidC family. Type 1 subfamily. As to quaternary structure, interacts with the Sec translocase complex via SecD. Specifically interacts with transmembrane segments of nascent integral membrane proteins during membrane integration.

Its subcellular location is the cell inner membrane. Functionally, required for the insertion and/or proper folding and/or complex formation of integral membrane proteins into the membrane. Involved in integration of membrane proteins that insert both dependently and independently of the Sec translocase complex, as well as at least some lipoproteins. Aids folding of multispanning membrane proteins. The chain is Membrane protein insertase YidC from Sinorhizobium fredii (strain NBRC 101917 / NGR234).